Here is a 594-residue protein sequence, read N- to C-terminus: Arginine--tRNA ligase (594 aa).

A 'HIGH' region motif is present at residues 133–143 (ANPTGPMNIVS).

It belongs to the class-I aminoacyl-tRNA synthetase family. Monomer.

Its subcellular location is the cytoplasm. The enzyme catalyses tRNA(Arg) + L-arginine + ATP = L-arginyl-tRNA(Arg) + AMP + diphosphate. The chain is Arginine--tRNA ligase from Leptospira biflexa serovar Patoc (strain Patoc 1 / Ames).